The primary structure comprises 313 residues: MPIRIPDQLPAADVLRTENIFVMSETRAASQEIRPLRVLILNLMPKKIETETQFLRLLSNSPLQVNVELLRIDDRPSKNTPTEHLDNFYRQFEMVKNRNFDGLIITGAPLGLVQFEDVIYWDHLKTIMEWAKSHVTSTLYVCWAAQAGLKLLYDLPKKTRKEKLSGVYHHRIHKPYHPVLRGFDDSFLAPHSRYADFSPEYLAEHTDLDILATSDDAGVYLATTKDKRNVFVTGHPEYDPHTLHNEYIRDLGEGMEPAIPVNYYPNDNPDNPPIASWRSHGHLLFSNWLNYCVYQQTPYDLDHFSEEAFTKDE.

C142 functions as the Acyl-thioester intermediate in the catalytic mechanism. Substrate-binding residues include K163 and S192. H235 acts as the Proton acceptor in catalysis. The active site involves E237. Residue R249 participates in substrate binding.

It belongs to the MetA family.

The protein localises to the cytoplasm. It catalyses the reaction L-homoserine + succinyl-CoA = O-succinyl-L-homoserine + CoA. Its pathway is amino-acid biosynthesis; L-methionine biosynthesis via de novo pathway; O-succinyl-L-homoserine from L-homoserine: step 1/1. Transfers a succinyl group from succinyl-CoA to L-homoserine, forming succinyl-L-homoserine. The protein is Homoserine O-succinyltransferase of Vibrio vulnificus (strain CMCP6).